The primary structure comprises 736 residues: MTVPPGKDPAPAPPGMLPAPEIAAILSGTHSNPFAVLGVHAAGKTYVARCFVPGAETVIAETLSGKELGTLERRDEAGFFEGPVALRKEQPIRYRARNDGGEWTVIDPYSFGPVLGPMDDYYIREGSHLRLFDKMGAHPIRHDGAEGFHFAVWAPNARRVSVVGSFNDWDGRRHVMRLRVDTGIWEIFIPGVPVGTPYKYEIVDSNGTLLPLKADPFARRSELRPDTASMTADEIAQNWEDEAHRRHWAEIDPRRQPISIYEVHAASWQRRDNGDMLTWDELAERLIPYCVDMGFTHIEFLPISEYPYDPSWGYQTTGLYAPTARFGEPEGFARFVNGCHKVGIGVILDWVPAHFPTDEHGLRWFDGTALYEHADPRQGFHPDWNTAIYNFGRQEVVAFLVNNALYWAEKFHVDGLRVDAVASMLYLDYSRKHGEWVPNEYGGNENLEAVRFLQTMNTRIYGIHQGVLTIAEESTSWPKVSHPVHAGGLGFGFKWNMGFMHDTLQYLSREPVHRKFHHNDMTFGLLYAFSENFVLPLSHDEVVHGKGSLIAKMAGDDWQKFANLRAYYGFMWGYPGKKLLFMGQEFAQWREWSEDRGLDWNLLEYNLHEGMRRLVRDLNGTYRSKPALHARDCEGDGFEWLIADDRENSVFAWLRKAPGEKLVAVVTNFTPVYREHYDIPLPVAGRWKEVLNTDAEIYGGSGKGNGGAVHAEKRANGETIATITLPPLATLMLEQD.

Aspartate 419 (nucleophile) is an active-site residue. The active-site Proton donor is the glutamate 472.

It belongs to the glycosyl hydrolase 13 family. GlgB subfamily. As to quaternary structure, monomer.

The catalysed reaction is Transfers a segment of a (1-&gt;4)-alpha-D-glucan chain to a primary hydroxy group in a similar glucan chain.. It functions in the pathway glycan biosynthesis; glycogen biosynthesis. Its function is as follows. Catalyzes the formation of the alpha-1,6-glucosidic linkages in glycogen by scission of a 1,4-alpha-linked oligosaccharide from growing alpha-1,4-glucan chains and the subsequent attachment of the oligosaccharide to the alpha-1,6 position. The sequence is that of 1,4-alpha-glucan branching enzyme GlgB from Rhizobium meliloti (strain 1021) (Ensifer meliloti).